The sequence spans 251 residues: 5-oxoprolinase subunit A (251 aa).

It belongs to the LamB/PxpA family. As to quaternary structure, forms a complex composed of PxpA, PxpB and PxpC.

The catalysed reaction is 5-oxo-L-proline + ATP + 2 H2O = L-glutamate + ADP + phosphate + H(+). Functionally, catalyzes the cleavage of 5-oxoproline to form L-glutamate coupled to the hydrolysis of ATP to ADP and inorganic phosphate. In Tolumonas auensis (strain DSM 9187 / NBRC 110442 / TA 4), this protein is 5-oxoprolinase subunit A.